A 291-amino-acid polypeptide reads, in one-letter code: ATP synthase gamma chain (291 aa).

It belongs to the ATPase gamma chain family. As to quaternary structure, F-type ATPases have 2 components, CF(1) - the catalytic core - and CF(0) - the membrane proton channel. CF(1) has five subunits: alpha(3), beta(3), gamma(1), delta(1), epsilon(1). CF(0) has three main subunits: a, b and c.

It is found in the cell inner membrane. Produces ATP from ADP in the presence of a proton gradient across the membrane. The gamma chain is believed to be important in regulating ATPase activity and the flow of protons through the CF(0) complex. The sequence is that of ATP synthase gamma chain from Burkholderia cenocepacia (strain ATCC BAA-245 / DSM 16553 / LMG 16656 / NCTC 13227 / J2315 / CF5610) (Burkholderia cepacia (strain J2315)).